A 300-amino-acid chain; its full sequence is uncharacterized protein (300 aa).

Helical transmembrane passes span 13 to 35 (LLCI…LQPL), 45 to 67 (MLTM…SLLS), 80 to 102 (WVLF…WAPL), 106 to 128 (GINI…WAWL), 180 to 202 (IPAL…IYIL), 217 to 236 (YWLL…SANL), 243 to 265 (PVSI…AVFV), and 275 to 294 (YFTY…EGLL).

This sequence belongs to the EamA transporter family.

It localises to the cell membrane. This is an uncharacterized protein from Haemophilus influenzae (strain ATCC 51907 / DSM 11121 / KW20 / Rd).